Consider the following 305-residue polypeptide: Sulfate adenylyltransferase subunit 2 (305 aa).

Belongs to the PAPS reductase family. CysD subfamily. Heterodimer composed of CysD, the smaller subunit, and CysN.

The enzyme catalyses sulfate + ATP + H(+) = adenosine 5'-phosphosulfate + diphosphate. It participates in sulfur metabolism; hydrogen sulfide biosynthesis; sulfite from sulfate: step 1/3. Functionally, with CysN forms the ATP sulfurylase (ATPS) that catalyzes the adenylation of sulfate producing adenosine 5'-phosphosulfate (APS) and diphosphate, the first enzymatic step in sulfur assimilation pathway. APS synthesis involves the formation of a high-energy phosphoric-sulfuric acid anhydride bond driven by GTP hydrolysis by CysN coupled to ATP hydrolysis by CysD. In Ectopseudomonas mendocina (strain ymp) (Pseudomonas mendocina), this protein is Sulfate adenylyltransferase subunit 2.